We begin with the raw amino-acid sequence, 270 residues long: tRNA pseudouridine synthase A (270 aa).

The Nucleophile role is filled by aspartate 60. Residues 107–111 (FHARF) form an RNA binding region. Tyrosine 118 serves as a coordination point for substrate. The segment at 168-172 (QCQSR) is interaction with tRNA.

The protein belongs to the tRNA pseudouridine synthase TruA family. In terms of assembly, homodimer.

The enzyme catalyses uridine(38/39/40) in tRNA = pseudouridine(38/39/40) in tRNA. Functionally, formation of pseudouridine at positions 38, 39 and 40 in the anticodon stem and loop of transfer RNAs. The polypeptide is tRNA pseudouridine synthase A (Escherichia coli (strain 55989 / EAEC)).